Here is an 89-residue protein sequence, read N- to C-terminus: MSVLEKPKKTAEQDWHRADILAELKKNGWSLRSLAKEGQVSYNTLKTVLDKSYPKMERLVANAIGVPPEVIWAGRFAERNKRPTLQHKY.

The segment at residues E57–F76 is a DNA-binding region (H-T-H motif).

This sequence belongs to the ner transcriptional regulatory family.

Negative regulator of transcription starting from the Pe and Pc promoters of Mu. Also negatively regulates its own gene transcription. This chain is Mu-like prophage FluMu DNA-binding protein Ner (nlp), found in Haemophilus influenzae (strain ATCC 51907 / DSM 11121 / KW20 / Rd).